The primary structure comprises 101 residues: MDIMQTAVAGSLESSDIMITVNPATDGITIDLESSVEKQFGRRIRQVIEETLKHLGVNGVLVQAVDKGALDCTIQARTIAAVHRAAGLDQYNWKEIDSWNV.

Serine 14 carries the O-(phosphoribosyl dephospho-coenzyme A)serine modification.

Belongs to the CitD family. In terms of assembly, oligomer with a subunit composition of (alpha,beta,gamma)6.

Its subcellular location is the cytoplasm. In terms of biological role, covalent carrier of the coenzyme of citrate lyase. This Streptococcus uberis (strain ATCC BAA-854 / 0140J) protein is Citrate lyase acyl carrier protein.